Reading from the N-terminus, the 151-residue chain is Endoribonuclease YbeY (151 aa).

Zn(2+) is bound by residues H117, H121, and H127.

This sequence belongs to the endoribonuclease YbeY family. It depends on Zn(2+) as a cofactor.

It is found in the cytoplasm. Functionally, single strand-specific metallo-endoribonuclease involved in late-stage 70S ribosome quality control and in maturation of the 3' terminus of the 16S rRNA. This is Endoribonuclease YbeY from Alkaliphilus oremlandii (strain OhILAs) (Clostridium oremlandii (strain OhILAs)).